Reading from the N-terminus, the 80-residue chain is Acyl carrier protein (80 aa).

The region spanning 2–77 is the Carrier domain; that stretch reads KNIEERIKKI…KSIDFIQNKN (76 aa). Ser37 bears the O-(pantetheine 4'-phosphoryl)serine mark.

The protein belongs to the acyl carrier protein (ACP) family. 4'-phosphopantetheine is transferred from CoA to a specific serine of apo-ACP by AcpS. This modification is essential for activity because fatty acids are bound in thioester linkage to the sulfhydryl of the prosthetic group.

The protein resides in the cytoplasm. The protein operates within lipid metabolism; fatty acid biosynthesis. Carrier of the growing fatty acid chain in fatty acid biosynthesis. This Buchnera aphidicola subsp. Acyrthosiphon pisum (strain 5A) protein is Acyl carrier protein.